Consider the following 197-residue polypeptide: Phosphoheptose isomerase (197 aa).

An SIS domain is found at 34 to 196; it reads MVQCLLGGNK…DRTLFPQDDQ (163 aa). A substrate-binding site is contributed by 49 to 51; the sequence is NGG. Zn(2+) contacts are provided by His58 and Glu62. Substrate-binding positions include Glu62, 91-92, 117-119, Ser122, and Gln172; these read ND and STS. 2 residues coordinate Zn(2+): Gln172 and His180.

It belongs to the SIS family. GmhA subfamily. Homotetramer. It depends on Zn(2+) as a cofactor.

Its subcellular location is the cytoplasm. It catalyses the reaction 2 D-sedoheptulose 7-phosphate = D-glycero-alpha-D-manno-heptose 7-phosphate + D-glycero-beta-D-manno-heptose 7-phosphate. Its pathway is carbohydrate biosynthesis; D-glycero-D-manno-heptose 7-phosphate biosynthesis; D-glycero-alpha-D-manno-heptose 7-phosphate and D-glycero-beta-D-manno-heptose 7-phosphate from sedoheptulose 7-phosphate: step 1/1. In terms of biological role, catalyzes the isomerization of sedoheptulose 7-phosphate in D-glycero-D-manno-heptose 7-phosphate. In Shewanella loihica (strain ATCC BAA-1088 / PV-4), this protein is Phosphoheptose isomerase.